We begin with the raw amino-acid sequence, 146 residues long: Putative nickel-responsive regulator 1 (146 aa).

Ni(2+) is bound by residues H81, H92, Y94, and C100.

Belongs to the transcriptional regulatory CopG/NikR family. Ni(2+) is required as a cofactor.

Transcriptional regulator. This chain is Putative nickel-responsive regulator 1, found in Methanosarcina mazei (strain ATCC BAA-159 / DSM 3647 / Goe1 / Go1 / JCM 11833 / OCM 88) (Methanosarcina frisia).